Reading from the N-terminus, the 368-residue chain is Geranylgeranyl pyrophosphate synthase dpfgD (368 aa).

Residues lysine 48, arginine 51, and histidine 80 each coordinate isopentenyl diphosphate. Residues aspartate 87 and aspartate 91 each coordinate Mg(2+). Residue arginine 96 coordinates dimethylallyl diphosphate. Arginine 97 is an isopentenyl diphosphate binding site. Dimethylallyl diphosphate-binding residues include lysine 174, threonine 175, and glutamine 208. Aspartate 211 is a binding site for Mg(2+). Positions 215, 225, and 235 each coordinate dimethylallyl diphosphate.

The protein belongs to the FPP/GGPP synthase family. It depends on Mg(2+) as a cofactor.

It catalyses the reaction isopentenyl diphosphate + dimethylallyl diphosphate = (2E)-geranyl diphosphate + diphosphate. The enzyme catalyses isopentenyl diphosphate + (2E)-geranyl diphosphate = (2E,6E)-farnesyl diphosphate + diphosphate. The catalysed reaction is isopentenyl diphosphate + (2E,6E)-farnesyl diphosphate = (2E,6E,10E)-geranylgeranyl diphosphate + diphosphate. Its pathway is secondary metabolite biosynthesis; terpenoid biosynthesis. Its function is as follows. Geranylgeranyl pyrophosphate synthase; part of the gene cluster that mediates the biosynthesis of diterpenoid pyrones. The first step of the pathway is the synthesis of the alpha-pyrone moiety by the polyketide synthase dpfgA via condensation of one acetyl-CoA starter unit with 3 malonyl-CoA units and 2 methylations. The alpha-pyrone is then combined with geranylgeranyl pyrophosphate (GGPP) formed by the GGPP synthase dpfgD through the action of the prenyltransferase dpfgC to yield a linear alpha-pyrone diterpenoid. Subsequent steps in the diterpenoid pyrone biosynthetic pathway involve the decalin core formation, which is initiated by the epoxidation of the C10-C11 olefin by the FAD-dependent oxidoreductase dpfgE, and is followed by a cyclization cascade catalyzed by the terpene cyclase dpfgB. The short chain dehydrogenase/reductase dpfgG then oxidizes the 8S hydroxy group to a ketone and the short chain dehydrogenase/reductase dpfgH reduces the ketone to the 8R hydroxy group to yield higginsianin B. Higginsianin B is further methylated by the methyltransferase dpfgI to produce the intermediate named FDDP B. The cytochrome P450 monooxygenase dfgpJ then catalyzes a three-step oxidation at C-27 to generate a carboxylic acid as well as C-26 hydroxylation. Finally, methyltransferase dpfgK methylates the carboxylic acid generated by dpfgJ, yielding the final diterpenoid pyrones from the pathway which were named FDDP D and FDDP E. This is Geranylgeranyl pyrophosphate synthase dpfgD from Gibberella zeae (strain ATCC MYA-4620 / CBS 123657 / FGSC 9075 / NRRL 31084 / PH-1) (Wheat head blight fungus).